We begin with the raw amino-acid sequence, 652 residues long: Translation factor guf1, mitochondrial (652 aa).

A mitochondrion-targeting transit peptide spans 1–44 (MSIFRLSRTFSLETCLKSSSFKIRWRFFSVSYASRKLASEDNKP). Residues 56–237 (NRVRNWAVIA…EIIQKIPPPK (182 aa)) form the tr-type G domain. Residues 65-72 (AHIDHGKS), 130-134 (DTPGH), and 184-187 (NKVD) contribute to the GTP site.

This sequence belongs to the TRAFAC class translation factor GTPase superfamily. Classic translation factor GTPase family. LepA subfamily.

It is found in the mitochondrion inner membrane. It catalyses the reaction GTP + H2O = GDP + phosphate + H(+). In terms of biological role, promotes mitochondrial protein synthesis. May act as a fidelity factor of the translation reaction, by catalyzing a one-codon backward translocation of tRNAs on improperly translocated ribosomes. Binds to mitochondrial ribosomes in a GTP-dependent manner. The protein is Translation factor guf1, mitochondrial (guf1) of Schizosaccharomyces pombe (strain 972 / ATCC 24843) (Fission yeast).